A 186-amino-acid chain; its full sequence is Ribosome-recycling factor (186 aa).

This sequence belongs to the RRF family.

It localises to the cytoplasm. In terms of biological role, responsible for the release of ribosomes from messenger RNA at the termination of protein biosynthesis. May increase the efficiency of translation by recycling ribosomes from one round of translation to another. This chain is Ribosome-recycling factor, found in Rickettsia akari (strain Hartford).